The chain runs to 126 residues: Aspartate 1-decarboxylase (126 aa).

Serine 25 acts as the Schiff-base intermediate with substrate; via pyruvic acid in catalysis. Residue serine 25 is modified to Pyruvic acid (Ser). Substrate is bound at residue threonine 57. Catalysis depends on tyrosine 58, which acts as the Proton donor. 73-75 (GAA) contacts substrate.

Belongs to the PanD family. Heterooctamer of four alpha and four beta subunits. Pyruvate serves as cofactor. Post-translationally, is synthesized initially as an inactive proenzyme, which is activated by self-cleavage at a specific serine bond to produce a beta-subunit with a hydroxyl group at its C-terminus and an alpha-subunit with a pyruvoyl group at its N-terminus.

The protein resides in the cytoplasm. The catalysed reaction is L-aspartate + H(+) = beta-alanine + CO2. It participates in cofactor biosynthesis; (R)-pantothenate biosynthesis; beta-alanine from L-aspartate: step 1/1. In terms of biological role, catalyzes the pyruvoyl-dependent decarboxylation of aspartate to produce beta-alanine. The protein is Aspartate 1-decarboxylase of Pseudomonas fluorescens.